The primary structure comprises 1021 residues: tRNA wybutosine-synthesizing protein 4 (1021 aa).

Residues R68, D122, 171 to 172 (DL), and E198 each bind S-adenosyl-L-methionine. The JmjC domain occupies 826-980 (PTEAPANLAE…STGRDVYGNR (155 aa)).

Belongs to the methyltransferase superfamily. LCMT family.

The enzyme catalyses 7-[(3S)-3-amino-3-carboxypropyl]wyosine(37) in tRNA(Phe) + S-adenosyl-L-methionine = 7-[(3S)-(3-amino-3-methoxycarbonyl)propyl]wyosine(37) in tRNA(Phe) + S-adenosyl-L-homocysteine. It catalyses the reaction 7-[(3S)-(3-amino-3-methoxycarbonyl)propyl]wyosine(37) in tRNA(Phe) + S-adenosyl-L-methionine + CO2 = wybutosine(37) in tRNA(Phe) + S-adenosyl-L-homocysteine + 2 H(+). It participates in tRNA modification; wybutosine-tRNA(Phe) biosynthesis. Probable S-adenosyl-L-methionine-dependent methyltransferase that acts as a component of the wybutosine biosynthesis pathway. Wybutosine is a hyper modified guanosine with a tricyclic base found at the 3'-position adjacent to the anticodon of eukaryotic phenylalanine tRNA. May methylate the carboxyl group of leucine residues to form alpha-leucine ester residues. The sequence is that of tRNA wybutosine-synthesizing protein 4 (PPM2) from Gibberella zeae (strain ATCC MYA-4620 / CBS 123657 / FGSC 9075 / NRRL 31084 / PH-1) (Wheat head blight fungus).